The following is a 785-amino-acid chain: Endonuclease MutS2 (785 aa).

An ATP-binding site is contributed by 331–338; it reads GPNTGGKT. Positions 710–785 constitute a Smr domain; sequence LDLRGLYADE…GLGVTVVELA (76 aa).

It belongs to the DNA mismatch repair MutS family. MutS2 subfamily. In terms of assembly, homodimer. Binds to stalled ribosomes, contacting rRNA.

Endonuclease that is involved in the suppression of homologous recombination and thus may have a key role in the control of bacterial genetic diversity. In terms of biological role, acts as a ribosome collision sensor, splitting the ribosome into its 2 subunits. Detects stalled/collided 70S ribosomes which it binds and splits by an ATP-hydrolysis driven conformational change. Acts upstream of the ribosome quality control system (RQC), a ribosome-associated complex that mediates the extraction of incompletely synthesized nascent chains from stalled ribosomes and their subsequent degradation. Probably generates substrates for RQC. The chain is Endonuclease MutS2 from Pelotomaculum thermopropionicum (strain DSM 13744 / JCM 10971 / SI).